The sequence spans 363 residues: Pyrimidine monooxygenase RutA (363 aa).

FMN contacts are provided by residues 49-50 (IK), N115, E124, 140-141 (RY), and S190.

It belongs to the NtaA/SnaA/DszA monooxygenase family. RutA subfamily.

It carries out the reaction uracil + FMNH2 + NADH + O2 = (Z)-3-ureidoacrylate + FMN + NAD(+) + H2O + H(+). The enzyme catalyses thymine + FMNH2 + NADH + O2 = (Z)-2-methylureidoacrylate + FMN + NAD(+) + H2O + H(+). Catalyzes the pyrimidine ring opening between N-3 and C-4 by an unusual flavin hydroperoxide-catalyzed mechanism, adding oxygen atoms in the process to yield ureidoacrylate peracid, that immediately reacts with FMN forming ureidoacrylate and FMN-N(5)-oxide. The FMN-N(5)-oxide reacts spontaneously with NADH to produce FMN. Requires the flavin reductase RutF to regenerate FMN in vivo. This chain is Pyrimidine monooxygenase RutA, found in Klebsiella pneumoniae subsp. pneumoniae (strain ATCC 700721 / MGH 78578).